A 615-amino-acid polypeptide reads, in one-letter code: DNA mismatch repair protein MutL (615 aa).

The tract at residues 363 to 397 (FAEPAVREPVAPRYTPAPASGSRPAAPWPNAQPGY) is disordered. Positions 378 to 391 (PAPASGSRPAAPWP) are enriched in low complexity.

This sequence belongs to the DNA mismatch repair MutL/HexB family.

Functionally, this protein is involved in the repair of mismatches in DNA. It is required for dam-dependent methyl-directed DNA mismatch repair. May act as a 'molecular matchmaker', a protein that promotes the formation of a stable complex between two or more DNA-binding proteins in an ATP-dependent manner without itself being part of a final effector complex. This Escherichia coli O157:H7 protein is DNA mismatch repair protein MutL.